The primary structure comprises 260 residues: Proliferating cell nuclear antigen (260 aa).

The DNA-binding element occupies 61-80 (RCDRNLAMGVNLSSMSKILK). A Glycyl lysine isopeptide (Lys-Gly) (interchain with G-Cter in ubiquitin) cross-link involves residue lysine 164.

The protein belongs to the PCNA family. In terms of assembly, homotrimer. Forms a complex with activator 1 heteropentamer in the presence of ATP. Component of the replisome complex. Monoubiquitinated by the ube2b-rad18 complex on Lys-164. Monoubiquitination at Lys-164 also takes place in undamaged proliferating cells, and is mediated by the dcx(dtl) complex, leading to enhance PCNA-dependent translesion DNA synthesis.

It localises to the nucleus. Functionally, this protein is an auxiliary protein of DNA polymerase delta and is involved in the control of eukaryotic DNA replication by increasing the polymerase's processibility during elongation of the leading strand. This Haplochromis burtoni (Burton's mouthbrooder) protein is Proliferating cell nuclear antigen (pcna).